The chain runs to 22 residues: Mu-conotoxin SxIIIC (22 aa).

3 disulfide bridges follow: Cys-3–Cys-15, Cys-4–Cys-21, and Cys-10–Cys-22. Cysteine amide is present on Cys-22.

It belongs to the conotoxin M superfamily. Expressed by the venom duct.

It is found in the secreted. Its function is as follows. Mu-conotoxins block voltage-gated sodium channels (Nav). This toxin potently inhibits hNav1.4/SCN4A (IC(50)=15.11 nM). It also displays lower activities on other human subtypes (Nav1.1/SCN1A; IC(50)=132 nM, Nav1.2/SCN2A; IC(50)=363.8, Nav1.3/SCN3A; IC(50)=89.4, Nav1.6/SCN3A; IC(50)=124.9, Nav1.7/SCN7A; IC(50)=152.2). At Nav1.7/SCN9A, it does not elicit change in channel voltage-dependence of fast inactivation or activation, suggesting it acts as a pore blocker. Interestingly, it blocks current inhibition in an irreversible manner (tested during 35 minutes). This is Mu-conotoxin SxIIIC from Conus striolatus (Cone snail).